Consider the following 717-residue polypeptide: Nuclear factor of activated T-cells, cytoplasmic 1 (717 aa).

The disordered stretch occupies residues 1 to 38; the sequence is MPNTSFPVPSKFPLGPPAAVCGSGETLRPAPPSGGTMK. Positions 120–125 are calcineurin-binding; the sequence is PRIEIT. The tract at residues 128–220 is transactivation domain A (TAD-A); it reads LGLHHGSGQF…CVSPKTTDPE (93 aa). The tract at residues 202 to 298 is disordered; the sequence is PQTSPWQSPC…PHGSPRVSVT (97 aa). Residues 203–216 are compositionally biased toward polar residues; the sequence is QTSPWQSPCVSPKT. A run of 2 repeats spans residues 205 to 221 and 235 to 251. Positions 205–300 are 3 X SP repeats; sequence SPWQSPCVSP…GSPRVSVTED (96 aa). Ser-235 and Ser-239 each carry phosphoserine. Residues 238-250 show a composition bias toward polar residues; sequence HSPSTSPRASITE. Ser-247 is modified (phosphoserine; by PKA). Positions 267 to 269 match the Nuclear localization signal motif; that stretch reads KRK. Phosphoserine; by PKA is present on residues Ser-271 and Ser-296. Repeat 3 spans residues 284–300; the sequence is SPTPSPHGSPRVSVTED. The Nuclear export signal motif lies at 312-323; the sequence is SAIVAAINALTT. The RHD domain occupies 411–593; that stretch reads PSLPALDWQL…NPIECSQRSA (183 aa). Residues 440–447 mediate DNA binding; the sequence is RAHYETEG. A Nuclear localization signal motif is present at residues 683-685; that stretch reads KRK.

As to quaternary structure, member of the multicomponent NFATC transcription complex that consists of at least two components, a pre-existing cytoplasmic component NFATC2 and an inducible nuclear component NFATC1. Other members such as NFATC4, NFATC3 or members of the activating protein-1 family, MAF, GATA4 and Cbp/p300 can also bind the complex. NFATC proteins bind to DNA as monomers. Interacts with HOMER2 and HOMER3; this interaction may compete with calcineurin/PPP3CA-binding and hence prevent NFATC1 dephosphorylation and activation. Interacts with TLE6/GRG6. Phosphorylated by NFATC-kinase and GSK3B; phosphorylation induces NFATC1 nuclear exit and dephosphorylation by calcineurin promotes nuclear import. Phosphorylation by PKA and DYRK2 negatively modulates nuclear accumulation, and promotes subsequent phosphorylation by GSK3B or casein kinase 1. In terms of tissue distribution, expressed in the submandibular gland (at protein level). Expressed in basal epidermal cells (at protein level). Expressed in spleen, skeletal muscle and skin. Express in the lung and thymus. Weakly expressed in heart, brain, liver and kidney. Not expressed in testis. Expressed in osteoclasts. Also expressed during TNFSF11/RANKL-induced differentiation of bone marrow-derived macrophages to osteoclasts.

It localises to the cytoplasm. It is found in the nucleus. Its function is as follows. Plays a role in the inducible expression of cytokine genes in T-cells, especially in the induction of the IL-2 or IL-4 gene transcription. Also controls gene expression in embryonic cardiac cells. Could regulate not only the activation and proliferation but also the differentiation and programmed death of T-lymphocytes as well as lymphoid and non-lymphoid cells. Required for osteoclastogenesis and regulates many genes important for osteoclast differentiation and function. The chain is Nuclear factor of activated T-cells, cytoplasmic 1 (Nfatc1) from Mus musculus (Mouse).